Reading from the N-terminus, the 663-residue chain is Probable serine/threonine-protein kinase DDB_G0283301 (663 aa).

The 275-residue stretch at Ile312 to Leu586 folds into the Protein kinase domain. ATP contacts are provided by residues Leu318–Val326 and Lys348. The active-site Proton acceptor is the Asp440.

This sequence belongs to the protein kinase superfamily. Ser/Thr protein kinase family.

It catalyses the reaction L-seryl-[protein] + ATP = O-phospho-L-seryl-[protein] + ADP + H(+). The enzyme catalyses L-threonyl-[protein] + ATP = O-phospho-L-threonyl-[protein] + ADP + H(+). The sequence is that of Probable serine/threonine-protein kinase DDB_G0283301 from Dictyostelium discoideum (Social amoeba).